The chain runs to 74 residues: Heat shock factor-binding protein 1-like protein 1 (74 aa).

Residues 12–65 adopt a coiled-coil conformation; sequence RALRDAAENLFQELQEHFQALTATLNLRMEEMGNRIEDLQKNVKDLMVQAGIEN.

The protein belongs to the HSBP1 family.

The polypeptide is Heat shock factor-binding protein 1-like protein 1 (HSBP1L1) (Homo sapiens (Human)).